Consider the following 176-residue polypeptide: NAD(P)H-quinone oxidoreductase subunit 6, chloroplastic (176 aa).

The next 5 membrane-spanning stretches (helical) occupy residues 10–30 (FLLV…VLLT), 32–52 (PIYS…FYIL), 61–81 (AQLL…VMFM), 92–112 (LWTL…LSLI), and 152–172 (FFLP…GAIA).

This sequence belongs to the complex I subunit 6 family. NDH is composed of at least 16 different subunits, 5 of which are encoded in the nucleus.

It localises to the plastid. Its subcellular location is the chloroplast thylakoid membrane. The catalysed reaction is a plastoquinone + NADH + (n+1) H(+)(in) = a plastoquinol + NAD(+) + n H(+)(out). The enzyme catalyses a plastoquinone + NADPH + (n+1) H(+)(in) = a plastoquinol + NADP(+) + n H(+)(out). In terms of biological role, NDH shuttles electrons from NAD(P)H:plastoquinone, via FMN and iron-sulfur (Fe-S) centers, to quinones in the photosynthetic chain and possibly in a chloroplast respiratory chain. The immediate electron acceptor for the enzyme in this species is believed to be plastoquinone. Couples the redox reaction to proton translocation, and thus conserves the redox energy in a proton gradient. The sequence is that of NAD(P)H-quinone oxidoreductase subunit 6, chloroplastic (ndhG) from Pelargonium hortorum (Common geranium).